Here is a 488-residue protein sequence, read N- to C-terminus: UDP-N-acetylmuramate--L-alanine ligase (488 aa).

An ATP-binding site is contributed by 129–135 (GSHGKTT).

The protein belongs to the MurCDEF family.

Its subcellular location is the cytoplasm. It carries out the reaction UDP-N-acetyl-alpha-D-muramate + L-alanine + ATP = UDP-N-acetyl-alpha-D-muramoyl-L-alanine + ADP + phosphate + H(+). The protein operates within cell wall biogenesis; peptidoglycan biosynthesis. Functionally, cell wall formation. The polypeptide is UDP-N-acetylmuramate--L-alanine ligase (Prochlorococcus marinus (strain MIT 9303)).